Here is an 89-residue protein sequence, read N- to C-terminus: Neuropeptide F (89 aa).

The first 29 residues, 1 to 29, serve as a signal peptide directing secretion; the sequence is MASGTFTQRLLVALMIFALIADLSTLVAA. Position 61 is a phenylalanine amide (F61). Positions 65-89 are excised as a propeptide; that stretch reads GGYLNPAIFGQDEQEVDWQDSTFSR.

The protein belongs to the NPY family.

It localises to the secreted. Functionally, an integral part of the sensory system that mediates food signaling, providing the neural basis for the regulation of food response; coordinates larval foraging and social behavior changes during development. May have a hormonal role in females. The chain is Neuropeptide F from Anopheles gambiae (African malaria mosquito).